Reading from the N-terminus, the 83-residue chain is Arminin 4364 (83 aa).

An N-terminal signal peptide occupies residues 1-18 (MKTVFAILFLAFIALTYA). Positions 19 to 55 (RSYEDVKEEIKNEVEKEILEDLEKETDELNERKINDA) are excised as a propeptide. Valine amide is present on V80.

The protein belongs to the arminin family. Expressed in entodermal epithelium along the body column.

The protein localises to the secreted. It is found in the target cell membrane. Functionally, antimicrobial peptide with a broad-spectrum antimicrobial activity. Keeps its antibacterial activity under a wide range of salt concentrations that mimic physiological conditions of human blood, which is surprising, since Hydra is an obligate freshwater animal with nearly no salt tolerance. Does not affect red blood cells. In Hydra vulgaris (Hydra), this protein is Arminin 4364.